A 93-amino-acid polypeptide reads, in one-letter code: YcgL domain-containing protein Ssed_2518 (93 aa).

The YcgL domain occupies 1-85; sequence MICAVYKSRR…PKVNLLEQHK (85 aa).

In Shewanella sediminis (strain HAW-EB3), this protein is YcgL domain-containing protein Ssed_2518.